A 205-amino-acid chain; its full sequence is MVFSSYKLPDLPYDYDALEPVISAEIMHLHHQKHHQGYINNLNEALKSLDVASATQDLTGLIAINPALRFNGGGHINHSLFWEMLAPQNKGGGTPPRHELLKLIEKFWGSFDNFLKNFISSSAAVQGSGWGWLAFCPKKQELMIQTTANQDPLEATTGMIPLLGVDVWEHAYYLQYKNARLDYLKNFPSIINWDYIESRFVEMSK.

The Mn(2+) site is built by histidine 30, histidine 78, aspartate 166, and histidine 170.

The protein belongs to the iron/manganese superoxide dismutase family. As to quaternary structure, homodimer. Mn(2+) is required as a cofactor.

The enzyme catalyses 2 superoxide + 2 H(+) = H2O2 + O2. Functionally, destroys superoxide anion radicals which are normally produced within the cells and which are toxic to biological systems. In Chlamydia muridarum (strain MoPn / Nigg), this protein is Superoxide dismutase [Mn] (sodA).